Reading from the N-terminus, the 161-residue chain is MKYDTSELCDIYHEEVNVVEPLFSNFGGRTSFGGQIITVKCFEDNGLLFDLLEENGRGRILLVDGGGSMRRALVDAALARLALQNEWEGIVVYGAVRQVDDLEELDIGIQAIAAIPVGAAGEGIGESDIRVNFGGVTFFSGDHLYADNTGMILSEDPLDIE.

The protein belongs to the RraA family. Homotrimer. Binds to both RNA-binding sites in the C-terminal region of Rne and to RhlB.

The protein localises to the cytoplasm. Functionally, globally modulates RNA abundance by binding to RNase E (Rne) and regulating its endonucleolytic activity. Can modulate Rne action in a substrate-dependent manner by altering the composition of the degradosome. Modulates RNA-binding and helicase activities of the degradosome. This Erwinia tasmaniensis (strain DSM 17950 / CFBP 7177 / CIP 109463 / NCPPB 4357 / Et1/99) protein is Regulator of ribonuclease activity A.